The primary structure comprises 331 residues: ATPase GET3 (331 aa).

Position 32 to 39 (32 to 39 (KGGVGKTT)) interacts with ATP. Residue Asp61 is part of the active site. 2 residues coordinate ATP: Glu235 and Asn262. Zn(2+)-binding residues include Cys273 and Cys276.

The protein belongs to the arsA ATPase family. In terms of assembly, homodimer.

It localises to the cytoplasm. The protein localises to the endoplasmic reticulum. Its function is as follows. ATPase required for the post-translational delivery of tail-anchored (TA) proteins to the endoplasmic reticulum. Recognizes and selectively binds the transmembrane domain of TA proteins in the cytosol. This complex then targets to the endoplasmic reticulum by membrane-bound receptors, where the tail-anchored protein is released for insertion. This process is regulated by ATP binding and hydrolysis. ATP binding drives the homodimer towards the closed dimer state, facilitating recognition of newly synthesized TA membrane proteins. ATP hydrolysis is required for insertion. Subsequently, the homodimer reverts towards the open dimer state, lowering its affinity for the membrane-bound receptor, and returning it to the cytosol to initiate a new round of targeting. This is ATPase GET3 from Malassezia globosa (strain ATCC MYA-4612 / CBS 7966) (Dandruff-associated fungus).